The chain runs to 280 residues: Bifunctional protein FolD (280 aa).

Residues 166–168 and Ser191 each bind NADP(+); that span reads GRS.

It belongs to the tetrahydrofolate dehydrogenase/cyclohydrolase family. In terms of assembly, homodimer.

It catalyses the reaction (6R)-5,10-methylene-5,6,7,8-tetrahydrofolate + NADP(+) = (6R)-5,10-methenyltetrahydrofolate + NADPH. The catalysed reaction is (6R)-5,10-methenyltetrahydrofolate + H2O = (6R)-10-formyltetrahydrofolate + H(+). The protein operates within one-carbon metabolism; tetrahydrofolate interconversion. In terms of biological role, catalyzes the oxidation of 5,10-methylenetetrahydrofolate to 5,10-methenyltetrahydrofolate and then the hydrolysis of 5,10-methenyltetrahydrofolate to 10-formyltetrahydrofolate. In Saccharophagus degradans (strain 2-40 / ATCC 43961 / DSM 17024), this protein is Bifunctional protein FolD.